Reading from the N-terminus, the 815-residue chain is Cell division control protein 53 (815 aa).

The required for interaction with SKP1/CBF3D and F-box protein stretch occupies residues 9-280 (DDLEATWNFI…WDDHTKKPLS (272 aa)). The tract at residues 448–748 (KKATKPEVAS…IEKELNTERQ (301 aa)) is required for interaction with CDC34/UBC3. In terms of domain architecture, Cullin neddylation spans 746–807 (ERQIFLEACI…QKGYLQRGDD (62 aa)). K760 participates in a covalent cross-link: Glycyl lysine isopeptide (Lys-Gly) (interchain with G-Cter in NEDD8).

Belongs to the cullin family. Component of multiple SCF (SKP1-CUL1-F-box) E3 ubiquitin-protein ligase complexes formed of CUL1, SKP1/HRT1, RBX1 and a variable F-box domain-containing protein as substrate-specific adapter. Component of the SCF(CDC4) complex containing CDC4. Component of the SCF(MET30) complex containing MET30. Component of the SCF(GRR1) complex containing GRR1. Component of the probable SCF(DIA2) complex containing DIA2. Component of the probable SCF(YDR131C) complex containing YDR131C. Component of the probable SCF(YDR306C) complex containing YDR306C. Component of the probable SCF(YLR224W) complex containing YLR224W. Component of the probable SCF(YJL149W) complex containing YJL149W. Component of the probable SCF(YNL311C) complex containing YNL311C. Component of the probable SCF(MDM30) complex containing MDM30. Component of the probable SCF(UFO1) complex containing UFO1. Component of the probable SCF(HRT3) complex containing HRT3. Component of the probable SCF(YBR280C) complex containing YBR280C. Component of the probable SCF(YBR352W) complex containing YBR352W. Interacts with DCN1, YBR280C, YLR224W and YLR352W. The unneddylated form interacts with LAG2/CAND1 and the interaction mediates the exchange of the F-box substrate-specific subunit. Post-translationally, neddylated; enhancing the ubiquitin-ligase activity.

The protein localises to the cytoplasm. It localises to the nucleus. In terms of biological role, core component of multiple cullin-RING-based SCF (SKP1-CUL1-F-box) E3 ubiquitin-protein ligase complexes which mediate the ubiquitination and subsequent proteasomal degradation of target proteins. As a scaffold protein may contribute to catalysis through positioning of the substrate and the ubiquitin-conjugating enzyme. The SCF complex associates with CDC34 as the E2 ubiquitin-conjugating enzyme. The functional specificity of the SCF complex depends on the type of F-box protein. SCF(CDC4) controls the G1-to-S phase transition; it directs ubiquitination of the phosphorylated CDK inhibitor SIC1 and of CDC6. SCF(CDC4) directs ubiquitination of GCN4. SCF(GRR1) directs ubiquitination of phosphorylated CLN1, CLN2 and GIC2. SCF(MET30) directs ubiquitination of MET4. SCF(DIA2) is specifically involved in the pheromone induced degradation of phosphorylated TEC1. SCF(MDM30) seems to direct ubiquitination of FZ01. Involved in the regulation of methionine biosynthesis genes. The protein is Cell division control protein 53 (CDC53) of Saccharomyces cerevisiae (strain ATCC 204508 / S288c) (Baker's yeast).